The primary structure comprises 218 residues: Small ribosomal subunit protein uS3 (218 aa).

The 69-residue stretch at 38–106 (IRKYIESKLA…RVHINIVEIK (69 aa)) folds into the KH type-2 domain.

This sequence belongs to the universal ribosomal protein uS3 family. In terms of assembly, part of the 30S ribosomal subunit. Forms a tight complex with proteins S10 and S14.

In terms of biological role, binds the lower part of the 30S subunit head. Binds mRNA in the 70S ribosome, positioning it for translation. This chain is Small ribosomal subunit protein uS3, found in Ligilactobacillus salivarius (strain UCC118) (Lactobacillus salivarius).